The primary structure comprises 279 residues: NAD kinase (279 aa).

Catalysis depends on D63, which acts as the Proton acceptor. NAD(+)-binding positions include 63 to 64 (DG), R68, 133 to 134 (NE), and D163.

Belongs to the NAD kinase family. It depends on a divalent metal cation as a cofactor.

The protein localises to the cytoplasm. It catalyses the reaction NAD(+) + ATP = ADP + NADP(+) + H(+). In terms of biological role, involved in the regulation of the intracellular balance of NAD and NADP, and is a key enzyme in the biosynthesis of NADP. Catalyzes specifically the phosphorylation on 2'-hydroxyl of the adenosine moiety of NAD to yield NADP. The sequence is that of NAD kinase from Protochlamydia amoebophila (strain UWE25).